A 156-amino-acid chain; its full sequence is Ribosomal RNA large subunit methyltransferase H (156 aa).

Residues Leu74, Gly105, and 124 to 129 each bind S-adenosyl-L-methionine; that span reads LSKLTL.

Belongs to the RNA methyltransferase RlmH family. As to quaternary structure, homodimer.

The protein resides in the cytoplasm. The enzyme catalyses pseudouridine(1915) in 23S rRNA + S-adenosyl-L-methionine = N(3)-methylpseudouridine(1915) in 23S rRNA + S-adenosyl-L-homocysteine + H(+). In terms of biological role, specifically methylates the pseudouridine at position 1915 (m3Psi1915) in 23S rRNA. The sequence is that of Ribosomal RNA large subunit methyltransferase H from Legionella pneumophila (strain Lens).